The following is a 131-amino-acid chain: ER membrane protein complex subunit 5 (131 aa).

The Cytoplasmic segment spans residues methionine 1–proline 3. Residues serine 4 to phenylalanine 22 traverse the membrane as a helical segment. The Lumenal portion of the chain corresponds to serine 23–isoleucine 43. A helical membrane pass occupies residues aspartate 44 to isoleucine 63. Residues alanine 64–arginine 131 lie on the Cytoplasmic side of the membrane. Position 120 is a phosphoserine (serine 120).

The protein belongs to the membrane magnesium transporter (TC 1.A.67) family. Component of the ER membrane protein complex (EMC).

It is found in the endoplasmic reticulum membrane. The protein localises to the golgi apparatus membrane. It localises to the early endosome membrane. Its function is as follows. Part of the endoplasmic reticulum membrane protein complex (EMC) that enables the energy-independent insertion into endoplasmic reticulum membranes of newly synthesized membrane proteins. Preferentially accommodates proteins with transmembrane domains that are weakly hydrophobic or contain destabilizing features such as charged and aromatic residues. Involved in the cotranslational insertion of multi-pass membrane proteins in which stop-transfer membrane-anchor sequences become ER membrane spanning helices. It is also required for the post-translational insertion of tail-anchored/TA proteins in endoplasmic reticulum membranes. By mediating the proper cotranslational insertion of N-terminal transmembrane domains in an N-exo topology, with translocated N-terminus in the lumen of the ER, controls the topology of multi-pass membrane proteins like the G protein-coupled receptors. By regulating the insertion of various proteins in membranes, it is indirectly involved in many cellular processes. May be involved in Mg(2+) transport. The polypeptide is ER membrane protein complex subunit 5 (Homo sapiens (Human)).